We begin with the raw amino-acid sequence, 468 residues long: Ribulose bisphosphate carboxylase large chain (468 aa).

Lysine 4 bears the N6,N6,N6-trimethyllysine mark. Residues asparagine 113 and threonine 163 each contribute to the substrate site. Lysine 165 (proton acceptor) is an active-site residue. Substrate is bound at residue lysine 167. Mg(2+)-binding residues include lysine 191, aspartate 193, and glutamate 194. Position 191 is an N6-carboxylysine (lysine 191). Histidine 284 functions as the Proton acceptor in the catalytic mechanism. Substrate is bound by residues arginine 285, histidine 317, and serine 369.

The protein belongs to the RuBisCO large chain family. Type I subfamily. As to quaternary structure, heterohexadecamer of 8 large chains and 8 small chains; disulfide-linked. The disulfide link is formed within the large subunit homodimers. The cofactor is Mg(2+). In terms of processing, the disulfide bond which can form in the large chain dimeric partners within the hexadecamer appears to be associated with oxidative stress and protein turnover.

The protein resides in the plastid. It localises to the chloroplast. The catalysed reaction is 2 (2R)-3-phosphoglycerate + 2 H(+) = D-ribulose 1,5-bisphosphate + CO2 + H2O. It catalyses the reaction D-ribulose 1,5-bisphosphate + O2 = 2-phosphoglycolate + (2R)-3-phosphoglycerate + 2 H(+). RuBisCO catalyzes two reactions: the carboxylation of D-ribulose 1,5-bisphosphate, the primary event in carbon dioxide fixation, as well as the oxidative fragmentation of the pentose substrate in the photorespiration process. Both reactions occur simultaneously and in competition at the same active site. The protein is Ribulose bisphosphate carboxylase large chain of Pandorea jasminoides (Bower vine).